Here is a 444-residue protein sequence, read N- to C-terminus: Phosphoglucosamine mutase (444 aa).

Ser102 serves as the catalytic Phosphoserine intermediate. Ser102, Asp241, Asp243, and Asp245 together coordinate Mg(2+). At Ser102 the chain carries Phosphoserine.

Belongs to the phosphohexose mutase family. It depends on Mg(2+) as a cofactor. In terms of processing, activated by phosphorylation.

It carries out the reaction alpha-D-glucosamine 1-phosphate = D-glucosamine 6-phosphate. Catalyzes the conversion of glucosamine-6-phosphate to glucosamine-1-phosphate. The sequence is that of Phosphoglucosamine mutase from Haemophilus ducreyi (strain 35000HP / ATCC 700724).